Here is an 87-residue protein sequence, read N- to C-terminus: Beta-toxin Ct17 (87 aa).

Residues 1-19 (MNSLLMITACLVLIGTVWA) form the signal peptide. The 66-residue stretch at 20 to 85 (KKDGYLVDKT…TWPLPNKRCG (66 aa)) folds into the LCN-type CS-alpha/beta domain. Cystine bridges form between Cys31–Cys84, Cys35–Cys60, Cys44–Cys65, and Cys48–Cys67. Cys84 is modified (cysteine amide).

The protein belongs to the long (4 C-C) scorpion toxin superfamily. Sodium channel inhibitor family. Beta subfamily. As to expression, expressed by the venom gland.

The protein resides in the secreted. Its function is as follows. Beta toxins bind voltage-independently at site-4 of sodium channels (Nav) and shift the voltage of activation toward more negative potentials thereby affecting sodium channel activation and promoting spontaneous and repetitive firing. Is possibly lethal to mice, freshwater shrimp and crickets. This Centruroides tecomanus (Scorpion) protein is Beta-toxin Ct17.